The following is a 355-amino-acid chain: Protein RecA (355 aa).

67–74 serves as a coordination point for ATP; sequence GPESSGKT.

It belongs to the RecA family.

It is found in the cytoplasm. Can catalyze the hydrolysis of ATP in the presence of single-stranded DNA, the ATP-dependent uptake of single-stranded DNA by duplex DNA, and the ATP-dependent hybridization of homologous single-stranded DNAs. It interacts with LexA causing its activation and leading to its autocatalytic cleavage. In Proteus mirabilis (strain HI4320), this protein is Protein RecA.